An 883-amino-acid chain; its full sequence is Phosphoenolpyruvate carboxylase (883 aa).

Active-site residues include His-138 and Lys-546.

It belongs to the PEPCase type 1 family. Mg(2+) is required as a cofactor.

It catalyses the reaction oxaloacetate + phosphate = phosphoenolpyruvate + hydrogencarbonate. Its function is as follows. Forms oxaloacetate, a four-carbon dicarboxylic acid source for the tricarboxylic acid cycle. The protein is Phosphoenolpyruvate carboxylase of Shigella flexneri.